The chain runs to 264 residues: 3-methyl-2-oxobutanoate hydroxymethyltransferase (264 aa).

Residues Asp45 and Asp84 each coordinate Mg(2+). Residues 45-46 (DS), Asp84, and Lys112 contribute to the 3-methyl-2-oxobutanoate site. Glu114 is a binding site for Mg(2+). The Proton acceptor role is filled by Glu181.

Belongs to the PanB family. As to quaternary structure, homodecamer; pentamer of dimers. Requires Mg(2+) as cofactor.

The protein resides in the cytoplasm. The enzyme catalyses 3-methyl-2-oxobutanoate + (6R)-5,10-methylene-5,6,7,8-tetrahydrofolate + H2O = 2-dehydropantoate + (6S)-5,6,7,8-tetrahydrofolate. It participates in cofactor biosynthesis; (R)-pantothenate biosynthesis; (R)-pantoate from 3-methyl-2-oxobutanoate: step 1/2. Functionally, catalyzes the reversible reaction in which hydroxymethyl group from 5,10-methylenetetrahydrofolate is transferred onto alpha-ketoisovalerate to form ketopantoate. The chain is 3-methyl-2-oxobutanoate hydroxymethyltransferase from Vibrio cholerae serotype O1 (strain ATCC 39541 / Classical Ogawa 395 / O395).